Reading from the N-terminus, the 300-residue chain is GTPase Era (300 aa).

An Era-type G domain is found at 8 to 176 (RCGYVAIVGR…ESLIASHLPE (169 aa)). A G1 region spans residues 16–23 (GRPNVGKS). GTP is bound at residue 16–23 (GRPNVGKS). A G2 region spans residues 42 to 46 (QTTRH). The tract at residues 63–66 (DTPG) is G3. Residues 63-67 (DTPGM) and 125-128 (NKTD) each bind GTP. Residues 125-128 (NKTD) form a G4 region. A G5 region spans residues 155–157 (ISA). The region spanning 199 to 283 (VREKIMRQLG…MLNLWVKVKG (85 aa)) is the KH type-2 domain.

The protein belongs to the TRAFAC class TrmE-Era-EngA-EngB-Septin-like GTPase superfamily. Era GTPase family. As to quaternary structure, monomer.

It localises to the cytoplasm. It is found in the cell inner membrane. Functionally, an essential GTPase that binds both GDP and GTP, with rapid nucleotide exchange. Plays a role in 16S rRNA processing and 30S ribosomal subunit biogenesis and possibly also in cell cycle regulation and energy metabolism. This is GTPase Era from Pseudomonas syringae pv. tomato (strain ATCC BAA-871 / DC3000).